The chain runs to 241 residues: DNA repair protein RecO (241 aa).

Belongs to the RecO family.

Its function is as follows. Involved in DNA repair and RecF pathway recombination. The protein is DNA repair protein RecO of Dinoroseobacter shibae (strain DSM 16493 / NCIMB 14021 / DFL 12).